The following is a 538-amino-acid chain: CTP synthase (538 aa).

Residues 1 to 270 (MSRTKFIFVT…DEVVLKTMGM (270 aa)) are amidoligase domain. CTP is bound at residue serine 15. Serine 15 is a UTP binding site. An ATP-binding site is contributed by 16 to 21 (SLGKGV). Position 56 (tyrosine 56) interacts with L-glutamine. Position 73 (aspartate 73) interacts with ATP. 2 residues coordinate Mg(2+): aspartate 73 and glutamate 143. CTP is bound by residues 150-152 (DIE), 190-195 (KTKPTQ), and lysine 226. UTP is bound by residues 190-195 (KTKPTQ) and lysine 226. Residues 295–537 (QIAVVGKYIS…IRASVKYSKK (243 aa)) enclose the Glutamine amidotransferase type-1 domain. Glycine 357 is a binding site for L-glutamine. Cysteine 384 (nucleophile; for glutamine hydrolysis) is an active-site residue. Residues 385 to 388 (LGMQ), glutamate 408, and arginine 465 each bind L-glutamine. Catalysis depends on residues histidine 510 and glutamate 512.

Belongs to the CTP synthase family. In terms of assembly, homotetramer.

The enzyme catalyses UTP + L-glutamine + ATP + H2O = CTP + L-glutamate + ADP + phosphate + 2 H(+). It catalyses the reaction L-glutamine + H2O = L-glutamate + NH4(+). It carries out the reaction UTP + NH4(+) + ATP = CTP + ADP + phosphate + 2 H(+). Its pathway is pyrimidine metabolism; CTP biosynthesis via de novo pathway; CTP from UDP: step 2/2. Its activity is regulated as follows. Allosterically activated by GTP, when glutamine is the substrate; GTP has no effect on the reaction when ammonia is the substrate. The allosteric effector GTP functions by stabilizing the protein conformation that binds the tetrahedral intermediate(s) formed during glutamine hydrolysis. Inhibited by the product CTP, via allosteric rather than competitive inhibition. Functionally, catalyzes the ATP-dependent amination of UTP to CTP with either L-glutamine or ammonia as the source of nitrogen. Regulates intracellular CTP levels through interactions with the four ribonucleotide triphosphates. The protein is CTP synthase of Leptospira interrogans serogroup Icterohaemorrhagiae serovar copenhageni (strain Fiocruz L1-130).